The sequence spans 815 residues: DNA gyrase subunit B (815 aa).

The disordered stretch occupies residues 1-21 (MEKTPATGSAVAPPPVEYGTD). Positions 430-545 (SELYIVEGDS…AISTSRSRRS (116 aa)) constitute a Toprim domain. Mg(2+)-binding residues include Glu436, Asp509, and Asp511.

The protein belongs to the type II topoisomerase GyrB family. Heterotetramer, composed of two GyrA and two GyrB chains. In the heterotetramer, GyrA contains the active site tyrosine that forms a transient covalent intermediate with DNA, while GyrB binds cofactors and catalyzes ATP hydrolysis. Mg(2+) serves as cofactor. The cofactor is Mn(2+). Requires Ca(2+) as cofactor.

The protein resides in the cytoplasm. It carries out the reaction ATP-dependent breakage, passage and rejoining of double-stranded DNA.. In terms of biological role, a type II topoisomerase that negatively supercoils closed circular double-stranded (ds) DNA in an ATP-dependent manner to modulate DNA topology and maintain chromosomes in an underwound state. Negative supercoiling favors strand separation, and DNA replication, transcription, recombination and repair, all of which involve strand separation. Also able to catalyze the interconversion of other topological isomers of dsDNA rings, including catenanes and knotted rings. Type II topoisomerases break and join 2 DNA strands simultaneously in an ATP-dependent manner. The protein is DNA gyrase subunit B of Myxococcus xanthus.